The sequence spans 109 residues: Cell division protein FtsL (109 aa).

The Cytoplasmic portion of the chain corresponds to 1 to 3; the sequence is MSR. A helical transmembrane segment spans residues 4-21; that stretch reads LNIFLLIIVMGCALSVVN. Topologically, residues 22-109 are periplasmic; it reads STNQQRQIFI…ASAAPTGGAR (88 aa).

Belongs to the FtsL family. As to quaternary structure, part of a complex composed of FtsB, FtsL and FtsQ.

It localises to the cell inner membrane. In terms of biological role, essential cell division protein. May link together the upstream cell division proteins, which are predominantly cytoplasmic, with the downstream cell division proteins, which are predominantly periplasmic. This Burkholderia pseudomallei (strain K96243) protein is Cell division protein FtsL.